Here is a 215-residue protein sequence, read N- to C-terminus: Octanoyltransferase (215 aa).

Residues 31–206 form the BPL/LPL catalytic domain; that stretch reads PDSQDEIWLV…QLVKHLDYAE (176 aa). Substrate-binding positions include 70–77, 137–139, and 150–152; these read RGGQVTYH, SLG, and GLA. Cys168 (acyl-thioester intermediate) is an active-site residue.

The protein belongs to the LipB family.

It is found in the cytoplasm. It catalyses the reaction octanoyl-[ACP] + L-lysyl-[protein] = N(6)-octanoyl-L-lysyl-[protein] + holo-[ACP] + H(+). Its pathway is protein modification; protein lipoylation via endogenous pathway; protein N(6)-(lipoyl)lysine from octanoyl-[acyl-carrier-protein]: step 1/2. In terms of biological role, catalyzes the transfer of endogenously produced octanoic acid from octanoyl-acyl-carrier-protein onto the lipoyl domains of lipoate-dependent enzymes. Lipoyl-ACP can also act as a substrate although octanoyl-ACP is likely to be the physiological substrate. This is Octanoyltransferase from Pseudomonas putida (strain GB-1).